The primary structure comprises 162 residues: Phosphopantetheine adenylyltransferase (162 aa).

Ser-9 contacts substrate. ATP contacts are provided by residues 9–10 (SF) and His-17. Substrate-binding residues include Lys-41, Val-77, and Lys-91. ATP is bound by residues 92–94 (GLR), Glu-102, and 126–132 (YAFLSSS).

This sequence belongs to the bacterial CoaD family. As to quaternary structure, homohexamer. Mg(2+) is required as a cofactor.

It localises to the cytoplasm. The catalysed reaction is (R)-4'-phosphopantetheine + ATP + H(+) = 3'-dephospho-CoA + diphosphate. The protein operates within cofactor biosynthesis; coenzyme A biosynthesis; CoA from (R)-pantothenate: step 4/5. Functionally, reversibly transfers an adenylyl group from ATP to 4'-phosphopantetheine, yielding dephospho-CoA (dPCoA) and pyrophosphate. In Frankia alni (strain DSM 45986 / CECT 9034 / ACN14a), this protein is Phosphopantetheine adenylyltransferase.